Consider the following 142-residue polypeptide: Hemoglobin subunit alpha-4 (142 aa).

Residues 2-142 (VLSAADKSNV…VSTVLTSKYR (141 aa)) form the Globin domain. H59 provides a ligand contact to O2. Residue H88 participates in heme b binding.

Belongs to the globin family. As to quaternary structure, heterotetramer of two alpha chains and two beta chains. Red blood cells.

Functionally, involved in oxygen transport from the lung to the various peripheral tissues. The protein is Hemoglobin subunit alpha-4 of Bubalus bubalis (Domestic water buffalo).